Consider the following 397-residue polypeptide: Succinyl-diaminopimelate desuccinylase (397 aa).

Zn(2+) is bound at residue histidine 73. Aspartate 75 is a catalytic residue. Residue aspartate 106 participates in Zn(2+) binding. Glutamate 140 serves as the catalytic Proton acceptor. Positions 141, 169, and 366 each coordinate Zn(2+).

The protein belongs to the peptidase M20A family. DapE subfamily. Homodimer. The cofactor is Zn(2+). It depends on Co(2+) as a cofactor.

It carries out the reaction N-succinyl-(2S,6S)-2,6-diaminopimelate + H2O = (2S,6S)-2,6-diaminopimelate + succinate. Its pathway is amino-acid biosynthesis; L-lysine biosynthesis via DAP pathway; LL-2,6-diaminopimelate from (S)-tetrahydrodipicolinate (succinylase route): step 3/3. Functionally, catalyzes the hydrolysis of N-succinyl-L,L-diaminopimelic acid (SDAP), forming succinate and LL-2,6-diaminopimelate (DAP), an intermediate involved in the bacterial biosynthesis of lysine and meso-diaminopimelic acid, an essential component of bacterial cell walls. The chain is Succinyl-diaminopimelate desuccinylase from Rhizobium etli (strain ATCC 51251 / DSM 11541 / JCM 21823 / NBRC 15573 / CFN 42).